The sequence spans 148 residues: 3-hydroxyacyl-[acyl-carrier-protein] dehydratase FabZ (148 aa).

Residue His-48 is part of the active site.

It belongs to the thioester dehydratase family. FabZ subfamily.

Its subcellular location is the cytoplasm. It carries out the reaction a (3R)-hydroxyacyl-[ACP] = a (2E)-enoyl-[ACP] + H2O. Involved in unsaturated fatty acids biosynthesis. Catalyzes the dehydration of short chain beta-hydroxyacyl-ACPs and long chain saturated and unsaturated beta-hydroxyacyl-ACPs. The polypeptide is 3-hydroxyacyl-[acyl-carrier-protein] dehydratase FabZ (Campylobacter concisus (strain 13826)).